We begin with the raw amino-acid sequence, 241 residues long: MSGASARSLGKGSAPPGPVPEGQIRVYSMRFCPFAQRTLMVLKAKGIRHEIININLKNKPEWFFEKNPFGLVPVLENTQGHLITESVITCEYLDEAYPEKKLFPDDPYEKACQKMTFELFSKVPSLVTSFIRAKRKEDHPGIKEELKKEFSKLEEAMANKRTAFFGGNSLSMIDYLIWPWFQRLEALELNECIDHTPKLKLWMATMQEDPVASSHFIDAKTYRDYLSLYLQDSPEACDYGL.

Position 2 is an N-acetylserine (serine 2). The region spanning 22-101 (GQIRVYSMRF…YLDEAYPEKK (80 aa)) is the GST N-terminal domain. Cysteine 32 (nucleophile) is an active-site residue. Residue lysine 57 is modified to N6-acetyllysine. Glutathione-binding positions include lysine 59, valine 72, and 85 to 86 (ES). Residues 106–228 (DPYEKACQKM…AKTYRDYLSL (123 aa)) enclose the GST C-terminal domain. At serine 129 the chain carries Phosphoserine. 3 positions are modified to N6-acetyllysine: lysine 143, lysine 148, and lysine 152.

The protein belongs to the GST superfamily. Omega family. In terms of assembly, homodimer.

The protein resides in the cytoplasm. It is found in the cytosol. The catalysed reaction is RX + glutathione = an S-substituted glutathione + a halide anion + H(+). The enzyme catalyses L-dehydroascorbate + 2 glutathione = glutathione disulfide + L-ascorbate. It carries out the reaction methylarsonate + 2 glutathione + H(+) = methylarsonous acid + glutathione disulfide + H2O. Functionally, exhibits glutathione-dependent thiol transferase and dehydroascorbate reductase activities. Has S-(phenacyl)glutathione reductase activity. Also has glutathione S-transferase activity. Participates in the biotransformation of inorganic arsenic and reduces monomethylarsonic acid (MMA) and dimethylarsonic acid. This is Glutathione S-transferase omega-1 (Gsto1) from Rattus norvegicus (Rat).